The following is a 145-amino-acid chain: Large ribosomal subunit protein uL15 (145 aa).

The interval 20–39 (GRVGKHRKHPSGRGNAGGEH) is disordered.

Belongs to the universal ribosomal protein uL15 family.

This Trypanosoma brucei brucei protein is Large ribosomal subunit protein uL15 (RPL27A).